The following is a 722-amino-acid chain: MTELKPLLIELGTEELPVNALPNLSRAFFEGVLAGLEKRGIVVDHGEAKSLSTPRRLAVLLTAVAVEQPKQYRELFGPYLNTAFDTEGKPTKALEGFAAKCGVNWRTLERIRDTKGERFVHRVVVPGERTDALLPGILTEAIAGMPIPKPMRWGAHEYLFARPVHWLVMLLGQDVVEAEIMGVKAGRISRGHRFLYDKPVSLSDPQNYIDVLQAAYVLVDPAARRARIVAEIEAVARQVGGVARITEDNVAQVVNLVEWPSAVLCSFERVFLEVPQEALIQTMEVNQKFFPVLDSLGKLTEKFIGIANIESNDVAEVAKGYERVIRPRFSDAKFFFNEDLKQGLKAMGERLRTVTYHAKLGTLADKVARVLVLAEAIAPQIGVDPLLARRVALLSKNDLQSRMVNEFPELQGIAGHHYALISGELPEVAMAIEDAYRPRFSGDEIARSPLGKVLGLAERLDTLACGFAVGMKPTGNKDPFGLRRNALGLARTMIESRFDLDLKVLLDQASDWVAFATTIEQERHAQESVKQSKKEAAVKHSVPQVSDEKSARIEELYDFIVERLRGYYADKGIPTTHFNAVAELKPVSLYDFHRRLDAIGRFAALPEAEALAVANKRIRNILRKAEIKIPASVDATLFDQPAESGLLVALEGVITDTRSALDCKNYVSVLTCLARLRPPIDEFFDKVMVNDENLMLRANRLALLQRLGEYLCCVAAIEHLSN.

This sequence belongs to the class-II aminoacyl-tRNA synthetase family. As to quaternary structure, tetramer of two alpha and two beta subunits.

It is found in the cytoplasm. It catalyses the reaction tRNA(Gly) + glycine + ATP = glycyl-tRNA(Gly) + AMP + diphosphate. In Xylella fastidiosa (strain 9a5c), this protein is Glycine--tRNA ligase beta subunit (glyS).